The chain runs to 178 residues: Cytochrome b6-f complex subunit 4 (178 aa).

3 consecutive transmembrane segments (helical) span residues 36–56 (LSYIFPVVILGTIACTIGLAV), 95–115 (LLGVLLMASVPAGSLTVPFLE), and 131–151 (TVSLIGTAVALWLGIGAALPI).

The protein belongs to the cytochrome b family. PetD subfamily. The 4 large subunits of the cytochrome b6-f complex are cytochrome b6, subunit IV (17 kDa polypeptide, petD), cytochrome f and the Rieske protein, while the 4 small subunits are petG, petL, petM and petN. The complex functions as a dimer.

The protein localises to the plastid. Its subcellular location is the chloroplast thylakoid membrane. Its function is as follows. Component of the cytochrome b6-f complex, which mediates electron transfer between photosystem II (PSII) and photosystem I (PSI), cyclic electron flow around PSI, and state transitions. The polypeptide is Cytochrome b6-f complex subunit 4 (Picea abies (Norway spruce)).